Consider the following 456-residue polypeptide: RuvB-like 1 (456 aa).

A Glycyl lysine isopeptide (Lys-Gly) (interchain with G-Cter in SUMO2) cross-link involves residue Lys2. 70–77 is an ATP binding site; sequence GPPGTGKT. Lys225 participates in a covalent cross-link: Glycyl lysine isopeptide (Lys-Gly) (interchain with G-Cter in SUMO1); alternate. Lys225 participates in a covalent cross-link: Glycyl lysine isopeptide (Lys-Gly) (interchain with G-Cter in SUMO2); alternate. Lys445 is covalently cross-linked (Glycyl lysine isopeptide (Lys-Gly) (interchain with G-Cter in SUMO2)). N6-acetyllysine is present on Lys453.

This sequence belongs to the RuvB family. Forms homohexameric rings. Can form a dodecamer with RUVBL2 made of two stacked hexameric rings; however, even though RUVBL1 and RUVBL2 are present in equimolar ratio, the oligomeric status of each hexamer is not known. Oligomerization may regulate binding to nucleic acids and conversely, binding to nucleic acids may affect the dodecameric assembly. Interaction of the complex with DHX34 results in conformational changes of the N-terminus of the RUVBL2 subunits, resulting in loss of nucleotide binding ability and ATP hydrolysis of the complex. Interacts with the transcriptional activation domain of MYC. Component of the RNA polymerase II holoenzyme complex. May also act to bridge the LEF1/TCF1-CTNNB1 complex and TBP. Component of the NuA4 histone acetyltransferase complex which contains the catalytic subunit KAT5/TIP60 and the subunits EP400, TRRAP/PAF400, BRD8/SMAP, EPC1, DMAP1/DNMAP1, RUVBL1/TIP49, RUVBL2, ING3, actin, ACTL6A/BAF53A, MORF4L1/MRG15, MORF4L2/MRGX, MRGBP, YEATS4/GAS41, VPS72/YL1 and MEAF6. The NuA4 complex interacts with MYC and the adenovirus E1A protein. RUVBL1 interacts with EP400. Component of a NuA4-related complex which contains EP400, TRRAP/PAF400, SRCAP, BRD8/SMAP, EPC1, DMAP1/DNMAP1, RUVBL1/TIP49, RUVBL2, actin, ACTL6A/BAF53A, VPS72 and YEATS4/GAS41. Component of the BAF53 complex, at least composed of ACTL6A/BAF53A, RUVBL1/TIP49, SMARCA2/BRM, and TRRAP/PAF400. Component of some MLL1/MLL complex, at least composed of the core components KMT2A/MLL1, ASH2L, HCFC1/HCF1, WDR5 and RBBP5, as well as the facultative components BACC1, CHD8, E2F6, HSP70, INO80C, KANSL1, LAS1L, MAX, MCRS1, MGA, MYST1/MOF, PELP1, PHF20, PRP31, RING2, RUVB1/TIP49A, RUVB2/TIP49B, SENP3, TAF1, TAF4, TAF6, TAF7, TAF9 and TEX10. Associates with alpha and gamma tubulins, particularly during metaphase and early anaphase. Interacts with NPAT. Component of the chromatin-remodeling INO80 complex; specifically part of a complex module associated with the helicase ATP-binding and the helicase C-terminal domain of INO80. Interacts with IGHMBP2. Interacts with OFD1. Interacts with HINT1. Component of a complex with USP49 and PSMC5. Component of a SWR1-like complex. Component of the R2TP complex composed at least of RUVBL1, RUVBL2, RPAP3 and PIHD1. Component of the PAQosome complex which is responsible for the biogenesis of several protein complexes and which consists of R2TP complex members RUVBL1, RUVBL2, RPAP3 and PIH1D1, URI complex members PFDN2, PFDN6, PDRG1, UXT and URI1 as well as ASDURF, POLR2E and DNAAF10/WDR92. Interacts with PIH1D1. Interacts with ITFG1. Interacts with WAC; WAC positively regulates MTOR activity by promoting the assembly of the TTT complex composed of TELO2, TTI1 and TTI2 and the RUVBL complex composed of RUVBL1 and RUVBL2 into the TTT-RUVBL complex which leads to the dimerization of the mTORC1 complex and its subsequent activation. The RUVBL1/RUVBL2 complex interacts with ZNHIT1 (via HIT-type zinc finger), ZNHIT3 (via HIT-type zinc finger), ZNHIT6 (via HIT-type zinc finger) and DDX59/ZNHIT5 (via HIT-type zinc finger) in the presence of ADP. Interacts with NOPCHAP1; the interaction is direct and disrupted upon ATP binding. Interacts with SMG1. Interacts with NOP2, NOP56 and NUFIP1.

It is found in the nucleus matrix. The protein localises to the nucleus. Its subcellular location is the nucleoplasm. The protein resides in the cytoplasm. It localises to the membrane. It is found in the cytoskeleton. The protein localises to the microtubule organizing center. Its subcellular location is the centrosome. The protein resides in the dynein axonemal particle. It carries out the reaction ATP + H2O = ADP + phosphate + H(+). In terms of biological role, possesses single-stranded DNA-stimulated ATPase and ATP-dependent DNA helicase (3' to 5') activity; hexamerization is thought to be critical for ATP hydrolysis and adjacent subunits in the ring-like structure contribute to the ATPase activity. Component of the NuA4 histone acetyltransferase complex which is involved in transcriptional activation of select genes principally by acetylation of nucleosomal histones H4 and H2A. This modification may both alter nucleosome-DNA interactions and promote interaction of the modified histones with other proteins which positively regulate transcription. This complex may be required for the activation of transcriptional programs associated with oncogene and proto-oncogene mediated growth induction, tumor suppressor mediated growth arrest and replicative senescence, apoptosis, and DNA repair. The NuA4 complex ATPase and helicase activities seem to be, at least in part, contributed by the association of RUVBL1 and RUVBL2 with EP400. NuA4 may also play a direct role in DNA repair when recruited to sites of DNA damage. Component of a SWR1-like complex that specifically mediates the removal of histone H2A.Z/H2AZ1 from the nucleosome. Proposed core component of the chromatin remodeling INO80 complex which exhibits DNA- and nucleosome-activated ATPase activity and catalyzes ATP-dependent nucleosome sliding. Plays an essential role in oncogenic transformation by MYC and also modulates transcriptional activation by the LEF1/TCF1-CTNNB1 complex. Essential for cell proliferation. May be able to bind plasminogen at cell surface and enhance plasminogen activation. This chain is RuvB-like 1 (Ruvbl1), found in Mus musculus (Mouse).